Here is a 382-residue protein sequence, read N- to C-terminus: Mannitol-1-phosphate 5-dehydrogenase (382 aa).

3 to 14 contacts NAD(+); that stretch reads ALHFGAGNIGRG. At K269 the chain carries N6-acetyllysine.

Belongs to the mannitol dehydrogenase family.

It catalyses the reaction D-mannitol 1-phosphate + NAD(+) = beta-D-fructose 6-phosphate + NADH + H(+). This is Mannitol-1-phosphate 5-dehydrogenase from Shigella sonnei (strain Ss046).